Here is a 461-residue protein sequence, read N- to C-terminus: Xyloglucan 6-xylosyltransferase 2 (461 aa).

The Cytoplasmic portion of the chain corresponds to 1 to 20; it reads MIERCLGAYRCRRIQRALRQ. The chain crosses the membrane as a helical; Signal-anchor for type II membrane protein span at residues 21-40; the sequence is LKVTILCLLLTVVVLRSTIG. Topologically, residues 41–461 are lumenal; that stretch reads AGKFGTPEQD…KAVKVQTNQV (421 aa). Positions 74–95 are disordered; that stretch reads QTGGDSSSGDGGGNSGGSNNYE. N432 carries N-linked (GlcNAc...) asparagine glycosylation.

This sequence belongs to the glycosyltransferase 34 family. As to quaternary structure, homodimer. Interacts with XXT1 and XXT5. Interacts with FUT1 and XLT2.

Its subcellular location is the golgi apparatus membrane. The catalysed reaction is Transfers an alpha-D-xylosyl residue from UDP-D-xylose to a glucose residue in xyloglucan, forming an alpha-(1-&gt;6)-D-xylosyl-D-glucose linkage.. Xylosyltransferase specific to UDP-D-xylose that accepts both cellopentaose and cellohexaose as substrates, with a better use of cellohexaose, to produce xyloglucan. Adds preferentially the first xylosyl residue to the fourth glucosyl residue from the reducing end of both acceptors. Transfer one xylose mainly to the second glucose residue from the non-reducing end. The acceptor should have a minimum of four glucose residues. Associates with other xyloglucan-synthesizing enzymes to form multiprotein complexes for xyloglucan synthesis in the Golgi. The polypeptide is Xyloglucan 6-xylosyltransferase 2 (XXT2) (Arabidopsis thaliana (Mouse-ear cress)).